Reading from the N-terminus, the 53-residue chain is uncharacterized protein (53 aa).

Its subcellular location is the mitochondrion. This is an uncharacterized protein from Saccharomyces cerevisiae (strain ATCC 204508 / S288c) (Baker's yeast).